The primary structure comprises 392 residues: Bifunctional enzyme Fae/Hps (392 aa).

A formaldehyde-activating enzyme region spans residues 1 to 161; sequence MFQIGEALMG…EESNKSTHAI (161 aa). The active-site Proton donor is the His-17. Residues Asp-19, Leu-48, Lys-66, Thr-68, and Gln-83 each contribute to the substrate site. The tract at residues 162–392 is 3-hexulose-6-phosphate synthase; that stretch reads MGFKVTRLWD…IDQFRVMTDF (231 aa).

The protein in the N-terminal section; belongs to the formaldehyde-activating enzyme family. It in the C-terminal section; belongs to the HPS/KGPDC family. HPS subfamily.

It catalyses the reaction 5,6,7,8-tetrahydromethanopterin + formaldehyde = 5,10-methylenetetrahydromethanopterin + H2O. It carries out the reaction D-ribulose 5-phosphate + formaldehyde = D-arabino-hex-3-ulose 6-phosphate. It functions in the pathway carbohydrate biosynthesis; D-ribose 5-phosphate biosynthesis. Catalyzes the condensation of formaldehyde with tetrahydromethanopterin (H(4)MPT) to 5,10-methylenetetrahydromethanopterin. Its function is as follows. Catalyzes the reversible formation of ribulose-5-phosphate and formaldehyde from 3-hexulose-6-phosphate. This chain is Bifunctional enzyme Fae/Hps, found in Methanosarcina mazei (strain ATCC BAA-159 / DSM 3647 / Goe1 / Go1 / JCM 11833 / OCM 88) (Methanosarcina frisia).